We begin with the raw amino-acid sequence, 341 residues long: Protein-glutamate methylesterase/protein-glutamine glutaminase 1 (341 aa).

One can recognise a Response regulatory domain in the interval 2–119 (KVGIVNDSAL…SDAKLTAGPL (118 aa)). A 4-aspartylphosphate modification is found at D53. Residues 146–331 (TLAASRLVAI…LTAIAPRLVQ (186 aa)) form the CheB-type methylesterase domain. Active-site residues include S158, H185, and D278.

The protein belongs to the CheB family. Post-translationally, phosphorylated by CheA. Phosphorylation of the N-terminal regulatory domain activates the methylesterase activity.

It is found in the cytoplasm. The enzyme catalyses [protein]-L-glutamate 5-O-methyl ester + H2O = L-glutamyl-[protein] + methanol + H(+). It carries out the reaction L-glutaminyl-[protein] + H2O = L-glutamyl-[protein] + NH4(+). In terms of biological role, involved in chemotaxis. Part of a chemotaxis signal transduction system that modulates chemotaxis in response to various stimuli. Catalyzes the demethylation of specific methylglutamate residues introduced into the chemoreceptors (methyl-accepting chemotaxis proteins or MCP) by CheR. Also mediates the irreversible deamidation of specific glutamine residues to glutamic acid. The protein is Protein-glutamate methylesterase/protein-glutamine glutaminase 1 of Cupriavidus pinatubonensis (strain JMP 134 / LMG 1197) (Cupriavidus necator (strain JMP 134)).